The primary structure comprises 59 residues: Large ribosomal subunit protein uL30 (59 aa).

Belongs to the universal ribosomal protein uL30 family. In terms of assembly, part of the 50S ribosomal subunit.

The chain is Large ribosomal subunit protein uL30 from Ectopseudomonas mendocina (strain ymp) (Pseudomonas mendocina).